The following is a 526-amino-acid chain: Alpha-1,3-mannosyl-glycoprotein 4-beta-N-acetylglucosaminyltransferase A (526 aa).

At 1 to 6 (MRLRNG) the chain is on the cytoplasmic side. The chain crosses the membrane as a helical; Signal-anchor for type II membrane protein span at residues 7-27 (TVATALVFVTSFLTLSWYTTW). A coiled-coil region spans residues 28-63 (QNGKEKLIAYQREFLALKERLRVAEHRISQRSSELN). The Lumenal portion of the chain corresponds to 28–526 (QNGKEKLIAY…NEIHIKKVTS (499 aa)). N-linked (GlcNAc...) asparagine glycosylation is present at asparagine 449. A Phosphoserine modification is found at serine 465.

It belongs to the glycosyltransferase 54 family. A divalent metal cation serves as cofactor. N-glycosylated.

Its subcellular location is the golgi apparatus membrane. The protein localises to the secreted. It carries out the reaction N(4)-{beta-D-GlcNAc-(1-&gt;2)-alpha-D-Man-(1-&gt;3)-[beta-D-GlcNAc-(1-&gt;2)-alpha-D-Man-(1-&gt;6)]-beta-D-Man-(1-&gt;4)-beta-D-GlcNAc-(1-&gt;4)-beta-D-GlcNAc}-L-asparaginyl-[protein] + UDP-N-acetyl-alpha-D-glucosamine = N(4)-{beta-D-GlcNAc-(1-&gt;2)-[beta-D-GlcNAc-(1-&gt;4)]-alpha-D-Man-(1-&gt;3)-[beta-D-GlcNAc-(1-&gt;2)-alpha-D-Man-(1-&gt;6)]-beta-D-Man-(1-&gt;4)-beta-D-GlcNAc-(1-&gt;4)-beta-D-GlcNAc}-L-asparaginyl-[protein] + UDP + H(+). It catalyses the reaction an N(4)-{beta-D-GlcNAc-(1-&gt;2)-alpha-D-Man-(1-&gt;3)-[alpha-D-Man-(1-&gt;6)]-beta-D-Man-(1-&gt;4)-beta-D-GlcNAc-(1-&gt;4)-beta-D-GlcNAc}-L-asparaginyl-[protein] + UDP-N-acetyl-alpha-D-glucosamine = an N(4)-{beta-D-GlcNAc-(1-&gt;2)-[beta-D-GlcNAc-(1-&gt;4)]-alpha-D-Man-(1-&gt;3)-[alpha-D-Man-(1-&gt;6)]-beta-D-Man-(1-&gt;4)-beta-D-GlcNAc-(1-&gt;4)-beta-D-GlcNAc}-L-asparaginyl-[protein] + UDP + H(+). The catalysed reaction is an N(4)-{beta-D-GlcNAc-(1-&gt;2)-alpha-D-Man-(1-&gt;3)-[beta-D-GlcNAc-(1-&gt;2)-[beta-D-GlcNAc-(1-&gt;6)]-alpha-D-Man-(1-&gt;6)]-beta-D-Man-(1-&gt;4)-beta-D-GlcNAc-(1-&gt;4)-beta-D-GlcNAc}-L-asparaginyl-[protein] + UDP-N-acetyl-alpha-D-glucosamine = an N(4)-{beta-D-GlcNAc-(1-&gt;2)-[beta-D-GlcNAc-(1-&gt;4)]-alpha-D-Man-(1-&gt;3)-[beta-D-GlcNAc-(1-&gt;2)-[beta-D-GlcNAc-(1-&gt;6)]-alpha-D-Man-(1-&gt;6)]-beta-D-Man-(1-&gt;4)-beta-D-GlcNAc-(1-&gt;4)-beta-D-GlcNAc}-L-asparaginyl-[protein] + UDP + H(+). The enzyme catalyses an N(4)-{beta-D-GlcNAc-(1-&gt;2)-alpha-D-Man-(1-&gt;3)-[beta-D-GlcNAc-(1-&gt;2)-alpha-D-Man-(1-&gt;6)]-beta-D-Man-(1-&gt;4)-beta-D-GlcNAc-(1-&gt;4)-[alpha-L-Fuc-(1-&gt;6)]-beta-D-GlcNAc}-L-asparaginyl-[protein] + UDP-N-acetyl-alpha-D-glucosamine = N(4)-{beta-D-GlcNAc-(1-&gt;2)-[beta-D-GlcNAc-(1-&gt;4)]-alpha-D-Man-(1-&gt;3)-[beta-D-GlcNAc-(1-&gt;2)-alpha-D-Man-(1-&gt;6)]-beta-D-Man-(1-&gt;4)-beta-D-GlcNAc-(1-&gt;4)-[alpha-L-Fuc-(1-&gt;6)]-beta-D-GlcNAc}-asparaginyl-[protein] + UDP + H(+). It carries out the reaction an N(4)-{beta-D-GlcNAc-(1-&gt;2)-alpha-D-Man-(1-&gt;3)-[beta-D-Gal-(1-&gt;4)-beta-D-GlcNAc-(1-&gt;2)-alpha-D-Man-(1-&gt;6)]-beta-D-Man-(1-&gt;4)-beta-D-GlcNAc-(1-&gt;4)-beta-D-GlcNAc}-L-asparaginyl-[protein] + UDP-N-acetyl-alpha-D-glucosamine = an N(4)-{beta-D-GlcNAc-(1-&gt;2)-[beta-D-GlcNAc-(1-&gt;4)]-alpha-D-Man-(1-&gt;3)-[beta-D-Gal-(1-&gt;4)-beta-D-GlcNAc-(1-&gt;2)-alpha-D-Man-(1-&gt;6)]-beta-D-Man-(1-&gt;4)-beta-D-GlcNAc-(1-&gt;4)-beta-D-GlcNAc}-L-asparaginyl-[protein] + UDP + H(+). It catalyses the reaction N(4)-{beta-D-GlcNAc-(1-&gt;2)-alpha-D-Man-(1-&gt;3)-[alpha-D-Man-(1-&gt;3)-{alpha-D-Man-(1-&gt;6)}-alpha-D-Man-(1-&gt;6)]-beta-D-Man-(1-&gt;4)-beta-D-GlcNAc-(1-&gt;4)-beta-D-GlcNAc}-asparaginyl-[protein] + UDP-N-acetyl-alpha-D-glucosamine = N(4)-{beta-D-GlcNAc-(1-&gt;2)-[beta-D-GlcNAc-(1-&gt;4)]-alpha-D-Man-(1-&gt;3)-[alpha-D-Man-(1-&gt;3)-{alpha-D-Man-(1-&gt;6)}-alpha-D-Man-(1-&gt;6)]-beta-D-Man-(1-&gt;4)-beta-D-GlcNAc-(1-&gt;4)-beta-D-GlcNAc}-asparaginyl-[protein] + UDP + H(+). The catalysed reaction is N(4)-{beta-D-GlcNAc-(1-&gt;2)-alpha-D-Man-(1-&gt;3)-beta-D-Man-(1-&gt;4)-beta-D-GlcNAc-(1-&gt;4)-beta-D-GlcNAc}-asparaginyl-[protein] + UDP-N-acetyl-alpha-D-glucosamine = N(4)-{beta-D-GlcNAc-(1-&gt;2)-[beta-D-GlcNAc-(1-&gt;4)]-alpha-D-Man-(1-&gt;3)-beta-D-Man-(1-&gt;4)-beta-D-GlcNAc-(1-&gt;4)-beta-D-GlcNAc}-asparaginyl-[protein] + UDP + H(+). The protein operates within protein modification; protein glycosylation. With respect to regulation, inhibited by UDP. Functionally, glycosyltransferase that catalyze the transfer of GlcNAc from UDP-GlcNAc to the GlcNAcbeta1-2Manalpha1-3 arm of the core structure of N-linked glycans through a beta1-4 linkage and participates in the production of tri- and tetra-antennary N-linked sugar chains. Involved in glucose transport by mediating SLC2A2/GLUT2 glycosylation, thereby controlling cell-surface expression of SLC2A2 in pancreatic beta cells. In Rattus norvegicus (Rat), this protein is Alpha-1,3-mannosyl-glycoprotein 4-beta-N-acetylglucosaminyltransferase A.